Reading from the N-terminus, the 209-residue chain is Large ribosomal subunit protein uL3 (209 aa).

Residues T133–P152 form a disordered region. Q150 bears the N5-methylglutamine mark.

It belongs to the universal ribosomal protein uL3 family. Part of the 50S ribosomal subunit. Forms a cluster with proteins L14 and L19. In terms of processing, methylated by PrmB.

In terms of biological role, one of the primary rRNA binding proteins, it binds directly near the 3'-end of the 23S rRNA, where it nucleates assembly of the 50S subunit. This Shigella sonnei (strain Ss046) protein is Large ribosomal subunit protein uL3.